Here is a 213-residue protein sequence, read N- to C-terminus: Protein arginine N-methyltransferase SFM1 (213 aa).

Residues serine 204 and serine 207 each carry the phosphoserine modification.

The protein belongs to the class IV-like SAM-binding methyltransferase superfamily. Protein arginine N-methyltransferase SFM1 family.

It is found in the cytoplasm. In terms of biological role, S-adenosyl-L-methionine-dependent protein-arginine N-methyltransferase that monomethylates ribosomal protein S3 (RPS3) at 'Arg-146'. This chain is Protein arginine N-methyltransferase SFM1, found in Saccharomyces cerevisiae (strain ATCC 204508 / S288c) (Baker's yeast).